An 89-amino-acid polypeptide reads, in one-letter code: MSLTTQETAAIIADYGVKEGDTGSPEVQVALLTSNINKLQGHFADHKKDHHSRRGLLRMVSQRRKLLDYLKGKNVERYQDLIKRLGLRR.

The protein belongs to the universal ribosomal protein uS15 family. As to quaternary structure, part of the 30S ribosomal subunit. Forms a bridge to the 50S subunit in the 70S ribosome, contacting the 23S rRNA.

One of the primary rRNA binding proteins, it binds directly to 16S rRNA where it helps nucleate assembly of the platform of the 30S subunit by binding and bridging several RNA helices of the 16S rRNA. Functionally, forms an intersubunit bridge (bridge B4) with the 23S rRNA of the 50S subunit in the ribosome. This Pseudoalteromonas atlantica (strain T6c / ATCC BAA-1087) protein is Small ribosomal subunit protein uS15.